The following is a 1119-amino-acid chain: DNA-directed RNA polymerase subunit beta (1119 aa).

The protein belongs to the RNA polymerase beta chain family. As to quaternary structure, the RNAP catalytic core consists of 2 alpha, 1 beta, 1 beta' and 1 omega subunit. When a sigma factor is associated with the core the holoenzyme is formed, which can initiate transcription.

It catalyses the reaction RNA(n) + a ribonucleoside 5'-triphosphate = RNA(n+1) + diphosphate. In terms of biological role, DNA-dependent RNA polymerase catalyzes the transcription of DNA into RNA using the four ribonucleoside triphosphates as substrates. The chain is DNA-directed RNA polymerase subunit beta from Thermus aquaticus.